The following is a 473-amino-acid chain: Photosystem II CP43 reaction center protein (473 aa).

Positions 1–14 are excised as a propeptide; that stretch reads MKTLYSLRRFYPVE. At threonine 15 the chain carries N-acetylthreonine. The residue at position 15 (threonine 15) is a Phosphothreonine. 5 helical membrane-spanning segments follow: residues 69–93, 134–155, 178–200, 255–275, and 291–312; these read LFEV…PHLA, LLGP…KDRN, KALY…RKIT, KPFA…LSYS, and WFNN…ASQA. Position 367 (glutamate 367) interacts with [CaMn4O5] cluster. A helical transmembrane segment spans residues 447-471; that stretch reads RARAAAAGFEKGIDRDFEPVLSMTP.

It belongs to the PsbB/PsbC family. PsbC subfamily. PSII is composed of 1 copy each of membrane proteins PsbA, PsbB, PsbC, PsbD, PsbE, PsbF, PsbH, PsbI, PsbJ, PsbK, PsbL, PsbM, PsbT, PsbX, PsbY, PsbZ, Psb30/Ycf12, at least 3 peripheral proteins of the oxygen-evolving complex and a large number of cofactors. It forms dimeric complexes. Requires Binds multiple chlorophylls and provides some of the ligands for the Ca-4Mn-5O cluster of the oxygen-evolving complex. It may also provide a ligand for a Cl- that is required for oxygen evolution. PSII binds additional chlorophylls, carotenoids and specific lipids. as cofactor.

The protein resides in the plastid. It localises to the chloroplast thylakoid membrane. One of the components of the core complex of photosystem II (PSII). It binds chlorophyll and helps catalyze the primary light-induced photochemical processes of PSII. PSII is a light-driven water:plastoquinone oxidoreductase, using light energy to abstract electrons from H(2)O, generating O(2) and a proton gradient subsequently used for ATP formation. The chain is Photosystem II CP43 reaction center protein from Eucalyptus globulus subsp. globulus (Tasmanian blue gum).